Consider the following 386-residue polypeptide: MEDEMPKTLYVGNLSRDVTEALILQLFSQIGPCKNCKMIMDTAGNDPYCFVEFHEHRHAAAALAAMNGRKIMGKEVKVNWATTPSSQKKDTSSSTVVSTQRSQDHFHVFVGDLSPEITTEDIKAAFAPFGRISDARVVKDMATGKSKGYGFVSFFNKWDAENAIQQMGGQWLGGRQIRTNWATRKPPAPKSTYESNTKQLSYDEVVSQSSPNNCTVYCGGVTSGLTEQLMRQTFSPFGQIMEIRVFPDKGYSFVRFSSHESAAHAIVSVNGTTIEGHVVKCYWGKETLDMINPVQQQNQIGYPPTYGQWGQWYGNAQQIGQYVPNGWQVPAYGVYGQPWSQQGFNQTQSSAPWMGPNYSVPPPQGQNGSMLPSQPAGYRVAGYETQ.

Methionine 1 bears the N-acetylmethionine mark. 3 consecutive RRM domains span residues 7 to 83 (KTLY…WATT), 106 to 184 (FHVF…WATR), and 214 to 286 (CTVY…WGKE). The disordered stretch occupies residues 355–376 (GPNYSVPPPQGQNGSMLPSQPA).

In terms of assembly, homooligomer; homooligomerization is induced by Zn(2+). Interacts with FASTK; the interactions leads to its phosphorylation. Interacts (via RRM1 and the C-terminal glutamine-rich (Q) sequence) with SNRPC/U1-C (via N-terminus); thereby facilitating spliceosomal U1 snRNP recruitment to 5' splice sites. Post-translationally, phosphorylatedby FASTK; phosphorylation occurs after FAS ligation in FAS-mediated apoptosis and before DNA fragmentation.

The protein localises to the nucleus. It is found in the cytoplasm. Its subcellular location is the stress granule. In terms of biological role, RNA-binding protein involved in the regulation of alternative pre-RNA splicing and mRNA translation by binding to uridine-rich (U-rich) RNA sequences. Binds to U-rich sequences immediately downstream from a 5' splice sites in a uridine-rich small nuclear ribonucleoprotein (U snRNP)-dependent fashion, thereby modulating alternative pre-RNA splicing. Preferably binds to the U-rich IAS1 sequence in a U1 snRNP-dependent manner; this binding is optimal if a 5' splice site is adjacent to IAS1. Activates the use of heterologous 5' splice sites; the activation depends on the intron sequence downstream from the 5' splice site, with a preference for a downstream U-rich sequence. By interacting with SNRPC/U1-C, promotes recruitment and binding of spliceosomal U1 snRNP to 5' splice sites followed by U-rich sequences, thereby facilitating atypical 5' splice site recognition by U1 snRNP. Activates splicing of alternative exons with weak 5' splice sites followed by a U-rich stretch on its own pre-mRNA and on TIAR mRNA. Acts as a modulator of alternative splicing for the apoptotic FAS receptor, thereby promoting apoptosis. Binds to the 5' splice site region of FAS intron 5 to promote accumulation of transcripts that include exon 6 at the expense of transcripts in which exon 6 is skipped, thereby leading to the transcription of a membrane-bound apoptotic FAS receptor, which promotes apoptosis. Binds to a conserved AU-rich cis element in COL2A1 intron 2 and modulates alternative splicing of COL2A1 exon 2. Also binds to the equivalent AT-rich element in COL2A1 genomic DNA, and may thereby be involved in the regulation of transcription. Involved in the repression of mRNA translation by binding to AU-rich elements (AREs) located in mRNA 3' untranslated regions (3' UTRs), including target ARE-bearing mRNAs encoding TNF and PTGS2. Also participates in the cellular response to environmental stress, by acting downstream of the stress-induced phosphorylation of EIF2S1/EIF2A to promote the recruitment of untranslated mRNAs to cytoplasmic stress granules (SGs), leading to stress-induced translational arrest. Formation and recruitment to SGs is regulated by Zn(2+). Possesses nucleolytic activity against cytotoxic lymphocyte target cells. In Mus musculus (Mouse), this protein is Cytotoxic granule associated RNA binding protein TIA1 (Tia1).